The chain runs to 250 residues: Probable transcriptional regulatory protein ROP_68700 (250 aa).

It belongs to the TACO1 family.

The protein resides in the cytoplasm. The sequence is that of Probable transcriptional regulatory protein ROP_68700 from Rhodococcus opacus (strain B4).